The sequence spans 1033 residues: Phospholipid-transporting ATPase neo1 (1033 aa).

The next 4 helical transmembrane spans lie at 133-153 (LKIGYLSTYIAPLIFVLLITL), 274-294 (TLWANTVLASDGVYGVVVYTG), 317-337 (INFYSKILCTFVLVLSIGLTF), and 344-364 (DWYISVFRYLILFSSIIPINL). Asp408 functions as the 4-aspartylphosphate intermediate in the catalytic mechanism. Residues Asp408, Lys409, Thr410, Glu491, Phe528, Ser530, Lys533, Lys551, Arg580, Thr581, Thr662, Gly663, Asp664, Arg744, and Lys750 each contribute to the ATP site. Asp408 is a Mg(2+) binding site. Thr410 provides a ligand contact to Mg(2+). The next 6 helical transmembrane spans lie at 768 to 788 (IGDGGNDVGMIQVANVGIGIV), 843 to 863 (VVYSVISAFEPIALFQGLLLV), 913 to 933 (VLISVYQGLIIQLFTFYLIGF), 939 to 959 (MLAVCFSCLIFNELIMVALQI), 965 to 985 (TIVMSELLTLMMYILSVPFLT), and 992 to 1012 (FLLGLKFYWVSALILFISLLP). Asp770 serves as a coordination point for Mg(2+). Asn773 and Asp774 together coordinate ATP. Asp774 provides a ligand contact to Mg(2+).

This sequence belongs to the cation transport ATPase (P-type) (TC 3.A.3) family. Type IV subfamily. In terms of assembly, functions without a CDC50/LEM3 family accessory subunit. It depends on Mg(2+) as a cofactor.

It is found in the endosome membrane. The protein resides in the golgi apparatus membrane. It carries out the reaction ATP + H2O + phospholipidSide 1 = ADP + phosphate + phospholipidSide 2.. The catalysed reaction is a 1,2-diacyl-sn-glycero-3-phospho-L-serine(out) + ATP + H2O = a 1,2-diacyl-sn-glycero-3-phospho-L-serine(in) + ADP + phosphate + H(+). The enzyme catalyses a 1,2-diacyl-sn-glycero-3-phosphoethanolamine(out) + ATP + H2O = a 1,2-diacyl-sn-glycero-3-phosphoethanolamine(in) + ADP + phosphate + H(+). Its function is as follows. Flippase that catalyzes the hydrolysis of ATP coupled to the transport of lysophosphatidylserine, phosphatidylethanolamine, and phosphatidylserine from the lumenal to the cytosolic leaflet of the Golgi apparatus membrane and ensures the maintenance of asymmetric distribution of phospholipids. The chain is Phospholipid-transporting ATPase neo1 from Schizosaccharomyces pombe (strain 972 / ATCC 24843) (Fission yeast).